Here is a 388-residue protein sequence, read N- to C-terminus: Norsolorinic acid reductase A (388 aa).

NADP(+) is bound at residue D69. Y74 (proton donor) is an active-site residue. Residue H148 participates in substrate binding. Residues 178-179 (SD), Q204, 233-243 (GVLGRGQFRSA), and 300-308 (RKVEHLKEN) contribute to the NADP(+) site.

Belongs to the aldo/keto reductase family. Aldo/keto reductase 2 subfamily.

It participates in mycotoxin biosynthesis; aflatoxin biosynthesis. In terms of biological role, norsolorinic acid reductase; part of the gene cluster that mediates the biosynthesis of aflatoxins, a group of polyketide-derived furanocoumarins, and part of the most toxic and carcinogenic compounds among the known mycotoxins. The four major aflatoxins produced by A.parasiticus are aflatoxin B1 (AFB1), aflatoxin B2 (AFB2), aflatoxin G1 (AFG1) and aflatoxin G2 (AFG2). Within the aflatoxin pathway, the norsolorinic acid reductase aflE may play a role in the conversion of norsolorinic acid (NOR) to averantin (AVN). The biosynthesis of aflatoxins begins with the norsolorinic acid synthase aflC that combines a hexanoyl starter unit produced by the fatty acid synthase aflA/aflB and 7 malonyl-CoA extender units to synthesize the precursor NOR. The second step is the conversion of NOR to averantin and requires the norsolorinic acid ketoreductase aflD, which catalyzes the dehydration of norsolorinic acid to form (1'S)-averantin. The norsolorinic acid reductases aflE and aflF may also play a role in the conversion of NOR to AVN. The cytochrome P450 monooxygenase aflG then catalyzes the hydroxylation of AVN to 5'hydroxyaverantin (HAVN). The next step is performed by the 5'-hydroxyaverantin dehydrogenase aflH that transforms HAVN to 5'-oxoaverantin (OAVN) which is further converted to averufin (AVF) by aflK that plays a dual role in the pathway, as a 5'-oxoaverantin cyclase that mediates conversion of 5'-oxoaverantin, as well as a versicolorin B synthase in a later step in the pathway. The averufin oxidase aflI catalyzes the conversion of AVF to versiconal hemiacetal acetate (VHA). VHA is then the substrate for the versiconal hemiacetal acetate esterase aflJ to yield versiconal (VAL). Versicolorin B synthase aflK then converts VAL to versicolorin B (VERB) by closing the bisfuran ring of aflatoxin which is required for DNA-binding, thus giving to aflatoxin its activity as a mutagen. Then, the activity of the versicolorin B desaturase aflL leads to versicolorin A (VERA). A branch point starts from VERB since it can also be converted to dihydrodemethylsterigmatocystin (DMDHST), probably also by aflL, VERA being a precursor for aflatoxins B1 and G1, and DMDHST for aflatoxins B2 and G2. Next, the versicolorin reductase aflM and the cytochrome P450 monooxygenase aflN are involved in conversion of VERA to demethylsterigmatocystin (DMST). AflX and aflY seem also involved in this step, through probable aflX-mediated epoxide ring-opening step following versicolorin A oxidation and aflY-mediated Baeyer-Villiger oxidation required for the formation of the xanthone ring. The methyltransferase aflO then leads to the modification of DMST to sterigmatocystin (ST), and of DMDHST to dihydrosterigmatocystin (DHST). Both ST and DHST are then substrates of the O-methyltransferase aflP to yield O-methylsterigmatocystin (OMST) and dihydro-O-methylsterigmatocystin (DHOMST), respectively. Finally OMST is converted to aflatoxins B1 and G1, and DHOMST to aflatoxins B2 and G2, via the action of several enzymes including O-methylsterigmatocystin oxidoreductase aflQ, the cytochrome P450 monooxygenase aflU, but also the NADH-dependent flavin oxidoreductase nadA which is specifically required for the synthesis of AFG1. The protein is Norsolorinic acid reductase A of Aspergillus parasiticus (strain ATCC 56775 / NRRL 5862 / SRRC 143 / SU-1).